The primary structure comprises 124 residues: MNHPSELKYARTHEWVKIEGDLVITGITDHAQDELGDLVYVETPEVGSQVTAGEQARVVESVKTASDIHAPVSGTVVEVNTDLEDDPDFVNEDPYGKGWIYKIKPDNIADVEKLLTNAEYEAGL.

The Lipoyl-binding domain occupies 22–104 (LVITGITDHA…YGKGWIYKIK (83 aa)). Lys-63 is subject to N6-lipoyllysine.

Belongs to the GcvH family. The glycine cleavage system is composed of four proteins: P, T, L and H. (R)-lipoate is required as a cofactor.

Its function is as follows. The glycine cleavage system catalyzes the degradation of glycine. The H protein shuttles the methylamine group of glycine from the P protein to the T protein. The chain is Glycine cleavage system H protein from Acinetobacter baumannii (strain SDF).